The primary structure comprises 245 residues: Eukaryotic translation initiation factor 4E type 2 (245 aa).

Residues 1–38 (MNNKFDALKDDDSGDHDQNEENSTQKDGEKEKTDRDKS) show a composition bias toward basic and acidic residues. The disordered stretch occupies residues 1 to 52 (MNNKFDALKDDDSGDHDQNEENSTQKDGEKEKTDRDKSQSSGKRKAVVPGPA). At Ser13 the chain carries Phosphoserine. The segment at 54–57 (HPLQ) is EIF4EBP1/2/3 binding. 78–79 (YE) contacts mRNA. Positions 95–99 (WKFYS) are EIF4EBP1/2/3 binding. MRNA contacts are provided by residues His110 and 124–125 (WE). At Lys134 the chain carries N6-acetyllysine; alternate. A Glycyl lysine isopeptide (Lys-Gly) (interchain with G-Cter in ISG15); alternate cross-link involves residue Lys134. An EIF4EBP1/2/3 binding region spans residues 150–157 (NLILAMLG). Residues 174–179 (RFQEDI) and 222–224 (KMP) contribute to the mRNA site. Lys222 participates in a covalent cross-link: Glycyl lysine isopeptide (Lys-Gly) (interchain with G-Cter in ISG15).

The protein belongs to the eukaryotic initiation factor 4E family. Interacts with EIF4EBP1, EIF4EBP2 and EIF4EBP3. Does not interact with eIF4G (EIF4G1, EIF4G2 or EIF4G3). Component of the 4EHP-GYF2 complex, at least composed of EIF4E2, GIGYF2 and ZNF598. Interacts with GIGYF2 (via the 4EHP-binding motif); the interaction is direct. Interacts with EIF4ENIF1/4E-T (via YXXXXLphi motif); increasing affinity for the 7-methylguanosine-containing mRNA cap. In terms of processing, ubiquitinated by ARIH1. The consequences of ubiquitination are however unclear: according to a report, EIF4E2 ubiquitination leads to promote EIF4E2 cap-binding and protein translation arrest. According to another report ubiquitination leads to its subsequent degradation. Post-translationally, ISGylation enhances its cap structure-binding activity and translation-inhibition activity. In terms of tissue distribution, widely expressed with highest levels in testis, kidney and liver.

The protein resides in the cytoplasm. It is found in the P-body. Functionally, recognizes and binds the 7-methylguanosine-containing mRNA cap during an early step in the initiation. Acts as a repressor of translation initiation. In contrast to EIF4E, it is unable to bind eIF4G (EIF4G1, EIF4G2 or EIF4G3), suggesting that it acts by competing with EIF4E and block assembly of eIF4F at the cap. In P-bodies, component of a complex that promotes miRNA-mediated translational repression. Involved in virus-induced host response by mediating miRNA MIR34A-induced translational silencing which controls IFNB1 production by a negative feedback mechanism. Component of the 4EHP-GYF2 complex, a multiprotein complex that acts as a repressor of translation initiation. In association with GIGYF2, assists ribosome-associated quality control (RQC) by sequestering the mRNA cap, blocking ribosome initiation and decreasing the translational load on problematic messages. Part of a pathway that works in parallel to RQC-mediated degradation of the stalled nascent polypeptide. GIGYF2 and EIF4E2 work downstream and independently of ZNF598, which seems to work as a scaffold that can recruit them to faulty mRNA even if alternative recruitment mechanisms may exist. The chain is Eukaryotic translation initiation factor 4E type 2 from Mus musculus (Mouse).